A 159-amino-acid chain; its full sequence is uncharacterized protein (159 aa).

The a divalent metal cation site is built by His44, His124, and His128.

Belongs to the DinB family.

This is an uncharacterized protein from Bacillus subtilis (strain 168).